Consider the following 285-residue polypeptide: Probable endonuclease 4 (285 aa).

Residues His-69, His-109, Glu-145, Asp-179, His-182, His-216, Asp-229, His-231, and Glu-261 each contribute to the Zn(2+) site.

Belongs to the AP endonuclease 2 family. Zn(2+) serves as cofactor.

It carries out the reaction Endonucleolytic cleavage to 5'-phosphooligonucleotide end-products.. Its function is as follows. Endonuclease IV plays a role in DNA repair. It cleaves phosphodiester bonds at apurinic or apyrimidinic (AP) sites, generating a 3'-hydroxyl group and a 5'-terminal sugar phosphate. The chain is Probable endonuclease 4 from Cronobacter sakazakii (strain ATCC BAA-894) (Enterobacter sakazakii).